The sequence spans 341 residues: Heme A synthase (341 aa).

A run of 8 helical transmembrane segments spans residues 8–28 (VIIW…VGGI), 92–112 (FHRF…VYFL), 126–146 (IVLL…VRSG), 160–180 (LHLT…LDLI), 201–221 (AALL…AGLI), 256–276 (VQFV…FLFF), 294–314 (LVVF…YSVP), and 315–335 (LALG…MTYT). His260 serves as a coordination point for heme. Residue His321 participates in heme binding.

Belongs to the COX15/CtaA family. Type 2 subfamily. Interacts with CtaB. The cofactor is heme b.

The protein resides in the cell membrane. The enzyme catalyses Fe(II)-heme o + 2 A + H2O = Fe(II)-heme a + 2 AH2. It functions in the pathway porphyrin-containing compound metabolism; heme A biosynthesis; heme A from heme O: step 1/1. In terms of biological role, catalyzes the conversion of heme O to heme A by two successive hydroxylations of the methyl group at C8. The first hydroxylation forms heme I, the second hydroxylation results in an unstable dihydroxymethyl group, which spontaneously dehydrates, resulting in the formyl group of heme A. This chain is Heme A synthase, found in Flavobacterium johnsoniae (strain ATCC 17061 / DSM 2064 / JCM 8514 / BCRC 14874 / CCUG 350202 / NBRC 14942 / NCIMB 11054 / UW101) (Cytophaga johnsonae).